Reading from the N-terminus, the 253-residue chain is 3-deoxy-manno-octulosonate cytidylyltransferase (253 aa).

This sequence belongs to the KdsB family.

It localises to the cytoplasm. The catalysed reaction is 3-deoxy-alpha-D-manno-oct-2-ulosonate + CTP = CMP-3-deoxy-beta-D-manno-octulosonate + diphosphate. Its pathway is nucleotide-sugar biosynthesis; CMP-3-deoxy-D-manno-octulosonate biosynthesis; CMP-3-deoxy-D-manno-octulosonate from 3-deoxy-D-manno-octulosonate and CTP: step 1/1. The protein operates within bacterial outer membrane biogenesis; lipopolysaccharide biosynthesis. Functionally, activates KDO (a required 8-carbon sugar) for incorporation into bacterial lipopolysaccharide in Gram-negative bacteria. The protein is 3-deoxy-manno-octulosonate cytidylyltransferase of Neisseria meningitidis serogroup C (strain 053442).